Consider the following 290-residue polypeptide: ATP synthase gamma chain (290 aa).

This sequence belongs to the ATPase gamma chain family. F-type ATPases have 2 components, CF(1) - the catalytic core - and CF(0) - the membrane proton channel. CF(1) has five subunits: alpha(3), beta(3), gamma(1), delta(1), epsilon(1). CF(0) has three main subunits: a, b and c.

The protein resides in the cell membrane. Produces ATP from ADP in the presence of a proton gradient across the membrane. The gamma chain is believed to be important in regulating ATPase activity and the flow of protons through the CF(0) complex. This chain is ATP synthase gamma chain, found in Chloroflexus aurantiacus (strain ATCC 29366 / DSM 635 / J-10-fl).